Reading from the N-terminus, the 278-residue chain is Elongation factor Ts (278 aa).

The involved in Mg(2+) ion dislocation from EF-Tu stretch occupies residues 82–85 (TDFV).

Belongs to the EF-Ts family.

Its subcellular location is the cytoplasm. In terms of biological role, associates with the EF-Tu.GDP complex and induces the exchange of GDP to GTP. It remains bound to the aminoacyl-tRNA.EF-Tu.GTP complex up to the GTP hydrolysis stage on the ribosome. In Streptomyces avermitilis (strain ATCC 31267 / DSM 46492 / JCM 5070 / NBRC 14893 / NCIMB 12804 / NRRL 8165 / MA-4680), this protein is Elongation factor Ts.